Here is a 226-residue protein sequence, read N- to C-terminus: Cobalt transport protein CbiM 2 (226 aa).

A run of 6 helical transmembrane segments spans residues 6-26, 43-63, 75-95, 107-127, 135-155, and 181-201; these read GFLP…VVAY, MLLG…MPSV, LGAI…VLLF, TLGA…AAVF, FPFG…TYVT, and VFAL…VVVM.

It belongs to the CbiM family. In terms of assembly, forms an energy-coupling factor (ECF) transporter complex composed of an ATP-binding protein (A component, CbiO), a transmembrane protein (T component, CbiQ) and 2 possible substrate-capture proteins (S components, CbiM and CbiN) of unknown stoichimetry.

The protein resides in the cell inner membrane. Its pathway is cofactor biosynthesis; adenosylcobalamin biosynthesis. Functionally, part of the energy-coupling factor (ECF) transporter complex CbiMNOQ involved in cobalt import. This chain is Cobalt transport protein CbiM 2, found in Pelobacter propionicus (strain DSM 2379 / NBRC 103807 / OttBd1).